We begin with the raw amino-acid sequence, 90 residues long: Putative regulatory protein Cbei_1140 (90 aa).

This sequence belongs to the RemA family.

The protein is Putative regulatory protein Cbei_1140 of Clostridium beijerinckii (strain ATCC 51743 / NCIMB 8052) (Clostridium acetobutylicum).